Consider the following 289-residue polypeptide: Bifunctional protein FolD (289 aa).

Residues 165–167 and Ser190 each bind NADP(+); that span reads GAS.

It belongs to the tetrahydrofolate dehydrogenase/cyclohydrolase family. In terms of assembly, homodimer.

It catalyses the reaction (6R)-5,10-methylene-5,6,7,8-tetrahydrofolate + NADP(+) = (6R)-5,10-methenyltetrahydrofolate + NADPH. The catalysed reaction is (6R)-5,10-methenyltetrahydrofolate + H2O = (6R)-10-formyltetrahydrofolate + H(+). Its pathway is one-carbon metabolism; tetrahydrofolate interconversion. Its function is as follows. Catalyzes the oxidation of 5,10-methylenetetrahydrofolate to 5,10-methenyltetrahydrofolate and then the hydrolysis of 5,10-methenyltetrahydrofolate to 10-formyltetrahydrofolate. This is Bifunctional protein FolD from Ralstonia pickettii (strain 12J).